A 498-amino-acid polypeptide reads, in one-letter code: Probable malate:quinone oxidoreductase (498 aa).

This sequence belongs to the MQO family. FAD serves as cofactor.

It catalyses the reaction (S)-malate + a quinone = a quinol + oxaloacetate. It functions in the pathway carbohydrate metabolism; tricarboxylic acid cycle; oxaloacetate from (S)-malate (quinone route): step 1/1. The chain is Probable malate:quinone oxidoreductase from Prochlorococcus marinus (strain MIT 9312).